A 596-amino-acid chain; its full sequence is MMRKFHEITGTETGAVSGEAGTIGTRKVYVTGSRPDIRVPMKEIVQKVGAQDESGTELLKIYLYDTSGPFTDPGAAVNIRAGLPAMREAWIEERHDSMVLSQLSSEYGRQRLAGRVEGGQYFPEERLPRRAGKGCNVTQMHYARKGIVTPEMEYIAIRENQRRESLPELLKKQHPGDPRGTRMPQVITPEYVRDEVAAGRAVIPCNINHPECEPMIIGRNFLVKINANIGNSAMSSSIDEEVEKMIWAIRWGGDTVMDLSTGVDIHETREWIIRNSPVPIGTVPIYQALEKVGGQAEELSWEIFRDTLIEQAEQGVDYFTIHAGVRSNLLEAAQRRLTGIVSRGGSIMTKWCKAHGQESFLYTRFEEICEIAKAYDVTFSLGDGLRPGSIYDANDEAQIEELKTLGELTETAWRHDVQVMIEGPGHVPMHMIQENMDLQLKYCHGAPFYTLGPLVTDIAPGYDHITSAIGGTMMAWCGTAMLCYVTPKEHLGLPDKNDVREGIVAHKIAAHAADLAKGHPGAQARDNALSKARFEFRWQDQFALGLDPERAMGIRKALLPEDAEDKEQYCTMCGPDFCSMKITRSLREGAAGGKEE.

Substrate is bound by residues Asn-228, Met-257, Tyr-286, His-322, 342–344 (SRG), 383–386 (DGLR), and Glu-422. Zn(2+) is bound at residue His-426. Position 449 (Tyr-449) interacts with substrate. Residue His-490 coordinates Zn(2+). Positions 570, 573, and 578 each coordinate [4Fe-4S] cluster.

Belongs to the ThiC family. Homodimer. It depends on [4Fe-4S] cluster as a cofactor.

The catalysed reaction is 5-amino-1-(5-phospho-beta-D-ribosyl)imidazole + S-adenosyl-L-methionine = 4-amino-2-methyl-5-(phosphooxymethyl)pyrimidine + CO + 5'-deoxyadenosine + formate + L-methionine + 3 H(+). The protein operates within cofactor biosynthesis; thiamine diphosphate biosynthesis. Functionally, catalyzes the synthesis of the hydroxymethylpyrimidine phosphate (HMP-P) moiety of thiamine from aminoimidazole ribotide (AIR) in a radical S-adenosyl-L-methionine (SAM)-dependent reaction. In Syntrophotalea carbinolica (strain DSM 2380 / NBRC 103641 / GraBd1) (Pelobacter carbinolicus), this protein is Phosphomethylpyrimidine synthase 1.